Consider the following 505-residue polypeptide: Histidine--tRNA ligase (505 aa).

Belongs to the class-II aminoacyl-tRNA synthetase family. As to quaternary structure, homodimer.

The protein localises to the cytoplasm. The catalysed reaction is tRNA(His) + L-histidine + ATP = L-histidyl-tRNA(His) + AMP + diphosphate + H(+). The polypeptide is Histidine--tRNA ligase (Jannaschia sp. (strain CCS1)).